The sequence spans 548 residues: DNA ligase (548 aa).

ATP is bound at residue Glu196. The N6-AMP-lysine intermediate role is filled by Lys198. 4 residues coordinate ATP: Arg203, Arg218, Glu250, and Phe284. Glu250 contributes to the a divalent metal cation binding site. Glu345 serves as a coordination point for a divalent metal cation. The ATP site is built by Arg361 and Lys365. Positions 515-548 (EQLIRNSQENTKKTFARLATTYDGPSPNKKLKLN) are disordered.

The protein belongs to the ATP-dependent DNA ligase family. A divalent metal cation serves as cofactor.

It carries out the reaction ATP + (deoxyribonucleotide)n-3'-hydroxyl + 5'-phospho-(deoxyribonucleotide)m = (deoxyribonucleotide)n+m + AMP + diphosphate.. In terms of biological role, able to ligate a double-stranded synthetic DNA substrate containing a single nick and inefficiently ligated a 1 nucleotide gap but did not ligate a 2 nucleotide gap. It is able to ligate short, complementary overhangs but not blunt-ended double-stranded DNA. May be implicated in DNA repair and recombination. In Lepidoptera (butterflies and moths), this protein is DNA ligase (LIG).